Here is a 193-residue protein sequence, read N- to C-terminus: Protein hunchback (193 aa).

2 disordered regions span residues 16 to 126 (SHHH…ATTT) and 146 to 193 (SNDK…KYMA). Positions 17 to 31 (HHHHHHHAHHSHHQH) are enriched in basic residues. Composition is skewed to low complexity over residues 35–46 (SNSNSNASSPHQ) and 56–77 (SSNN…QQQQ). Over residues 89 to 99 (PSPSNNDQNSR) the composition is skewed to polar residues. Residues 174–193 (EPEKEHDLMSNSSEDMKYMA) show a composition bias toward basic and acidic residues.

It belongs to the hunchback C2H2-type zinc-finger protein family.

The protein resides in the nucleus. Its function is as follows. Gap class segmentation protein that controls development of head structures. This is Protein hunchback (hb) from Drosophila iki (Fruit fly).